The primary structure comprises 190 residues: Zinc metalloproteinase/disintegrin (190 aa).

In terms of domain architecture, Peptidase M12B spans 1 to 11 (NHNPECIVNEP). A Disintegrin domain is found at 19-105 (PPVCGNELLE…ECPADVFHKN (87 aa)). The Ca(2+) site is built by valine 21, asparagine 24, leucine 26, glutamate 28, glutamate 31, and aspartate 34. 6 cysteine pairs are disulfide-bonded: cysteine 33–cysteine 51, cysteine 35–cysteine 46, cysteine 45–cysteine 68, cysteine 59–cysteine 65, cysteine 64–cysteine 90, and cysteine 77–cysteine 97. Positions 83-85 (ECD) match the D/ECD-tripeptide motif. Residues aspartate 85, proline 86, glutamate 88, aspartate 100, and valine 101 each coordinate Ca(2+). Residues 104-190 (KNGQPCLDNY…DNSPGQNGPC (87 aa)) constitute a propeptide that is removed on maturation.

The protein belongs to the venom metalloproteinase (M12B) family. P-III subfamily. As to quaternary structure, monomer. Zn(2+) serves as cofactor. As to expression, expressed by the venom gland.

The protein resides in the secreted. Its function is as follows. Impairs hemostasis in the envenomed animal. In terms of biological role, inhibits platelet aggregation induced by ADP, thrombin, platelet-activating factor and collagen. Acts by inhibiting fibrinogen interaction with platelet receptors GPIIb/GPIIIa (ITGA2B/ITGB3). The protein is Zinc metalloproteinase/disintegrin of Gloydius brevicauda (Korean slamosa snake).